A 61-amino-acid chain; its full sequence is Bactericidin B-5P (61 aa).

The first 22 residues, 1–22 (MNFSRVLFFVFACLSAFAMASA), serve as a signal peptide directing secretion. Residues 23-24 (AP) constitute a propeptide, removed by a dipeptidylpeptidase. Gly-60 bears the Glycine amide mark.

It belongs to the cecropin family.

The protein resides in the secreted. Cecropins have lytic and antibacterial activity against several Gram-positive and Gram-negative bacteria. This Manduca sexta (Tobacco hawkmoth) protein is Bactericidin B-5P.